Here is a 250-residue protein sequence, read N- to C-terminus: DNA repair protein RecO (250 aa).

The protein belongs to the RecO family.

Its function is as follows. Involved in DNA repair and RecF pathway recombination. The chain is DNA repair protein RecO from Syntrophomonas wolfei subsp. wolfei (strain DSM 2245B / Goettingen).